A 513-amino-acid polypeptide reads, in one-letter code: ATP synthase subunit alpha (513 aa).

Gly169–Thr176 contacts ATP.

Belongs to the ATPase alpha/beta chains family. F-type ATPases have 2 components, CF(1) - the catalytic core - and CF(0) - the membrane proton channel. CF(1) has five subunits: alpha(3), beta(3), gamma(1), delta(1), epsilon(1). CF(0) has three main subunits: a(1), b(2) and c(9-12). The alpha and beta chains form an alternating ring which encloses part of the gamma chain. CF(1) is attached to CF(0) by a central stalk formed by the gamma and epsilon chains, while a peripheral stalk is formed by the delta and b chains.

Its subcellular location is the cell inner membrane. It carries out the reaction ATP + H2O + 4 H(+)(in) = ADP + phosphate + 5 H(+)(out). Its function is as follows. Produces ATP from ADP in the presence of a proton gradient across the membrane. The alpha chain is a regulatory subunit. The sequence is that of ATP synthase subunit alpha from Dichelobacter nodosus (strain VCS1703A).